Consider the following 222-residue polypeptide: Transmembrane protein 114 (222 aa).

The chain crosses the membrane as a helical span at residues Ala7 to Ile27. N-linked (GlcNAc...) asparagine glycosylation is found at Asn54 and Asn88. A run of 3 helical transmembrane segments spans residues Phe105 to Leu125, Leu133 to Ile153, and Leu188 to Ala208.

The protein resides in the cell junction. The protein localises to the tight junction. It localises to the lateral cell membrane. Its subcellular location is the apical cell membrane. The sequence is that of Transmembrane protein 114 from Mus musculus (Mouse).